The chain runs to 117 residues: UPF0145 protein PH1682 (117 aa).

This sequence belongs to the UPF0145 family.

The chain is UPF0145 protein PH1682 from Pyrococcus horikoshii (strain ATCC 700860 / DSM 12428 / JCM 9974 / NBRC 100139 / OT-3).